We begin with the raw amino-acid sequence, 507 residues long: ATP synthase subunit alpha, chloroplastic (507 aa).

170-177 is a binding site for ATP; that stretch reads GDRQTGKT.

Belongs to the ATPase alpha/beta chains family. F-type ATPases have 2 components, CF(1) - the catalytic core - and CF(0) - the membrane proton channel. CF(1) has five subunits: alpha(3), beta(3), gamma(1), delta(1), epsilon(1). CF(0) has four main subunits: a, b, b' and c.

Its subcellular location is the plastid. It localises to the chloroplast thylakoid membrane. It carries out the reaction ATP + H2O + 4 H(+)(in) = ADP + phosphate + 5 H(+)(out). Produces ATP from ADP in the presence of a proton gradient across the membrane. The alpha chain is a regulatory subunit. This chain is ATP synthase subunit alpha, chloroplastic, found in Ceratophyllum demersum (Rigid hornwort).